The chain runs to 1538 residues: Dicer-like protein 1 (1538 aa).

A disordered region spans residues 39-72; sequence DPAESSADVHKDEHSSDNSDNDNEAVPKPNDFSQ. The segment covering 45 to 55 has biased composition (basic and acidic residues); the sequence is ADVHKDEHSSD. The Helicase ATP-binding domain occupies 134-315; it reads LFERAKTQNT…EAATRLETLL (182 aa). 147-154 contributes to the ATP binding site; it reads LDTGSGKT. The short motif at 260 to 263 is the DEAH box element; the sequence is DEAH. The region spanning 460-619 is the Helicase C-terminal domain; sequence ELSKHFSDTT…ETLPEDRILH (160 aa). The 91-residue stretch at 652-742 folds into the Dicer dsRNA-binding fold domain; it reads AIAILARYAS…NSIYHRRLPA (91 aa). The PAZ domain maps to 892-1020; it reads DTVSFVHNND…ICAEPLRISA (129 aa). RNase III domains follow at residues 1044-1203 and 1254-1406; these read IALE…LSGG and ARHV…VDSK. Residues E1295, D1392, and E1395 each coordinate Mg(2+). The DRBM domain occupies 1440–1508; it reads TFLHNKLTNE…SEKALAVLDG (69 aa). Zn(2+) is bound by residues C1452, H1479, C1520, and C1522.

Belongs to the helicase family. Dicer subfamily. It depends on Mg(2+) as a cofactor. Mn(2+) serves as cofactor.

Dicer-like endonuclease involved in cleaving double-stranded RNA in the RNA interference (RNAi) pathway. Produces 21 to 25 bp dsRNAs (siRNAs) which target the selective destruction of homologous RNAs leading to sequence-specific suppression of gene expression, called post-transcriptional gene silencing (PTGS). Part of a broad host defense response against viral infection and transposons. The polypeptide is Dicer-like protein 1 (dcl1) (Neosartorya fischeri (strain ATCC 1020 / DSM 3700 / CBS 544.65 / FGSC A1164 / JCM 1740 / NRRL 181 / WB 181) (Aspergillus fischerianus)).